A 416-amino-acid chain; its full sequence is FBD-associated F-box protein At3g52670 (416 aa).

Residues 9–62 (EDRMNQLPEDLILRILSFLPTELVIATSVLSKQWRSLWKLVPNLEFDSDDYESE) form the F-box domain. The FBD domain occupies 327-378 (KWNEPKYVPECLLSHLETFVWIRYDWEREEEKEVATYILRNARWLKKGTIST).

The protein is FBD-associated F-box protein At3g52670 of Arabidopsis thaliana (Mouse-ear cress).